The sequence spans 113 residues: Large ribosomal subunit protein uL22 (113 aa).

The protein belongs to the universal ribosomal protein uL22 family. Part of the 50S ribosomal subunit.

Its function is as follows. This protein binds specifically to 23S rRNA; its binding is stimulated by other ribosomal proteins, e.g. L4, L17, and L20. It is important during the early stages of 50S assembly. It makes multiple contacts with different domains of the 23S rRNA in the assembled 50S subunit and ribosome. Functionally, the globular domain of the protein is located near the polypeptide exit tunnel on the outside of the subunit, while an extended beta-hairpin is found that lines the wall of the exit tunnel in the center of the 70S ribosome. The polypeptide is Large ribosomal subunit protein uL22 (Oceanobacillus iheyensis (strain DSM 14371 / CIP 107618 / JCM 11309 / KCTC 3954 / HTE831)).